The chain runs to 673 residues: DNA ligase (673 aa).

Residues 38-42, 87-88, and glutamate 119 contribute to the NAD(+) site; these read DSVYD and SL. Lysine 121 serves as the catalytic N6-AMP-lysine intermediate. Residues arginine 142, glutamate 179, lysine 296, and lysine 320 each coordinate NAD(+). Cysteine 414, cysteine 417, cysteine 432, and cysteine 438 together coordinate Zn(2+). The BRCT domain occupies 595-673; it reads VVKSEIAGKT…EEAFLKLLKS (79 aa).

The protein belongs to the NAD-dependent DNA ligase family. LigA subfamily. Mg(2+) is required as a cofactor. The cofactor is Mn(2+).

The enzyme catalyses NAD(+) + (deoxyribonucleotide)n-3'-hydroxyl + 5'-phospho-(deoxyribonucleotide)m = (deoxyribonucleotide)n+m + AMP + beta-nicotinamide D-nucleotide.. In terms of biological role, DNA ligase that catalyzes the formation of phosphodiester linkages between 5'-phosphoryl and 3'-hydroxyl groups in double-stranded DNA using NAD as a coenzyme and as the energy source for the reaction. It is essential for DNA replication and repair of damaged DNA. The chain is DNA ligase from Coxiella burnetii (strain RSA 493 / Nine Mile phase I).